Reading from the N-terminus, the 553-residue chain is Putative transport protein ASA_0825 (553 aa).

Helical transmembrane passes span 4–24 (IALSISMLSLVAVLGLWLGNW), 29–49 (VGLGIGGVLFGGIIVGHFAGV), 65–85 (FGLILFVYTIGIQVGPGFFSS), 95–115 (GFAALLVILGCVVAAGLHQLF), and 158–178 (MGYAVAYPFGICGILLTMWLV). RCK C-terminal domains are found at residues 191–276 (DLFE…VLGE) and 279–361 (ETSL…VVGN). 6 helical membrane-spanning segments follow: residues 371–391 (MLPVFIGIGLGVLLGSIPFYL), 403–425 (AGGPLVVALILSRIGSIGKLYWF), 439–459 (IVLFLAVVGFKSGAGFVDTLI), 465–485 (AWMMYGMAITLIPLLVVGVLA), 493–513 (YLTLCGLLAGSMTDPPALAFA), and 533–553 (LVMFLRIISPQLLAILLWAGV).

The protein belongs to the AAE transporter (TC 2.A.81) family. YidE subfamily.

It is found in the cell membrane. The polypeptide is Putative transport protein ASA_0825 (Aeromonas salmonicida (strain A449)).